The primary structure comprises 569 residues: Glutamate--tRNA ligase (569 aa).

A 'HIGH' region motif is present at residues 99–109 (PEPNGYPTLGH).

Belongs to the class-I aminoacyl-tRNA synthetase family. Glutamate--tRNA ligase type 2 subfamily.

It localises to the cytoplasm. The enzyme catalyses tRNA(Glu) + L-glutamate + ATP = L-glutamyl-tRNA(Glu) + AMP + diphosphate. Catalyzes the attachment of glutamate to tRNA(Glu) in a two-step reaction: glutamate is first activated by ATP to form Glu-AMP and then transferred to the acceptor end of tRNA(Glu). The chain is Glutamate--tRNA ligase from Korarchaeum cryptofilum (strain OPF8).